Consider the following 124-residue polypeptide: MEYEFRRNSLTGTYLASFSMDHEVLGQWFSEELGPELAKIQQVLDIIKDIQAGKRDSWRLIGGDLTLDLDEEQARIYANALGFEQEYELEESMSLYDAESEAYCGLEDLEEALLSWYEFVEKGR.

It belongs to the UPF0231 family.

The protein is UPF0231 protein Shewmr4_0656 of Shewanella sp. (strain MR-4).